The following is a 708-amino-acid chain: Ubiquitin thioesterase ZRANB1 (708 aa).

Residues 3–33 (ERGIKWACEYCTYENWPSAIKCTMCRAQRPS) form a RanBP2-type 1 zinc finger. Residues Cys10, Cys13, Cys24, and Cys27 each contribute to the Zn(2+) site. The interval 38–73 (TEDPFKSGSSDVGRDWDPSSTEGGSSPLICPDSSAR) is disordered. 2 consecutive RanBP2-type zinc fingers follow at residues 84 to 113 (NANK…QRRT) and 149 to 178 (RTQH…PRPN). Residues Cys90, Cys93, Cys104, Cys107, Cys155, Cys158, Cys169, and Cys172 each coordinate Zn(2+). The segment at 200-225 (RARWRGSCSSGNSQRRSPPATKRDSE) is disordered. Residues 206–215 (SCSSGNSQRR) show a composition bias toward polar residues. 2 ANK repeats span residues 260–290 (KKTD…SGGD) and 313–340 (YTLV…QQAA). A TRAF-binding region spans residues 392–641 (PTVQEKLFDE…LSAQELGNEE (250 aa)). The OTU domain maps to 432–592 (LYALWNRTAG…RGHFSALVAM (161 aa)). Catalysis depends on Cys443, which acts as the Nucleophile. Catalysis depends on His585, which acts as the Proton acceptor.

It belongs to the peptidase C64 family. In terms of assembly, interacts with TRAF6. Interacts with APC. In terms of tissue distribution, widely expressed.

The protein resides in the cytoplasm. The protein localises to the nucleus. The enzyme catalyses Thiol-dependent hydrolysis of ester, thioester, amide, peptide and isopeptide bonds formed by the C-terminal Gly of ubiquitin (a 76-residue protein attached to proteins as an intracellular targeting signal).. In terms of biological role, ubiquitin thioesterase, which specifically hydrolyzes 'Lys-29'-linked and 'Lys-33'-linked diubiquitin. Also cleaves 'Lys-63'-linked chains, but with 40-fold less efficiency compared to 'Lys-29'-linked ones. Positive regulator of the Wnt signaling pathway that deubiquitinates APC protein, a negative regulator of Wnt-mediated transcription. Acts as a regulator of autophagy by mediating deubiquitination of PIK3C3/VPS34, thereby promoting autophagosome maturation. Plays a role in the regulation of cell morphology and cytoskeletal organization. Required in the stress fiber dynamics and cell migration. The chain is Ubiquitin thioesterase ZRANB1 from Homo sapiens (Human).